We begin with the raw amino-acid sequence, 325 residues long: Helicase VP6-A (325 aa).

Disordered regions lie at residues 1–126 and 175–231; these read MLLA…TNGR and GVAE…PARI. Basic and acidic residues-rich tracts occupy residues 8 to 18, 32 to 54, 61 to 79, and 92 to 105; these read VIKRSSEELKQ, EGGKEDKTEPKEESKAEGSKDGE, GQKEEGGKETKDADVDRRI, and PGERANENADRGDG. Residue lysine 106 coordinates ATP. Over residues 106–122 the composition is skewed to gly residues; it reads KVGGGGGDADAGVGATG. A compositionally biased stretch (basic and acidic residues) spans 175–229; it reads GVAEQTERLRDLRRKEKNGTHAKAVERGGRKQRKESHGDAQREGVEEEKTSEEPA.

This sequence belongs to the orbivirus VP6 family. Homohexamer.

It localises to the virion. The catalysed reaction is ATP + H2O = ADP + phosphate + H(+). Its function is as follows. ATP dependent RNA helicase essential for RNA packaging and viral transcription. Possesses ss- and dsRNA-binding capacity. The chain is Helicase VP6-A (Segment-9) from Bluetongue virus 11 (isolate USA) (BTV 11).